We begin with the raw amino-acid sequence, 757 residues long: Polyribonucleotide nucleotidyltransferase (757 aa).

D488 and D494 together coordinate Mg(2+). Residues 555 to 614 (PKLYTMKINAEKIRDVIGKGGAVIRALTEETGCQINIEEDGTITIAATDAAKADIAKRRI) enclose the KH domain. The region spanning 624-692 (GKIYEGPVTK…ERGRVKLSMK (69 aa)) is the S1 motif domain. A disordered region spans residues 693–757 (VLAERPAPGS…ADTGSGQRVG (65 aa)). Residues 720–736 (ALAEREPRREMRDHGHP) are compositionally biased toward basic and acidic residues. Low complexity predominate over residues 737–747 (PSEQQQQQSPP).

The protein belongs to the polyribonucleotide nucleotidyltransferase family. The cofactor is Mg(2+).

The protein resides in the cytoplasm. It catalyses the reaction RNA(n+1) + phosphate = RNA(n) + a ribonucleoside 5'-diphosphate. In terms of biological role, involved in mRNA degradation. Catalyzes the phosphorolysis of single-stranded polyribonucleotides processively in the 3'- to 5'-direction. The polypeptide is Polyribonucleotide nucleotidyltransferase (Verminephrobacter eiseniae (strain EF01-2)).